The chain runs to 407 residues: Chorismate synthase (407 aa).

NADP(+)-binding residues include R43 and R49. FMN contacts are provided by residues 143–145 (RSS), 264–265 (QA), G308, 323–327 (KPIST), and R349.

This sequence belongs to the chorismate synthase family. In terms of assembly, homotetramer. FMNH2 serves as cofactor.

The catalysed reaction is 5-O-(1-carboxyvinyl)-3-phosphoshikimate = chorismate + phosphate. It participates in metabolic intermediate biosynthesis; chorismate biosynthesis; chorismate from D-erythrose 4-phosphate and phosphoenolpyruvate: step 7/7. Functionally, catalyzes the anti-1,4-elimination of the C-3 phosphate and the C-6 proR hydrogen from 5-enolpyruvylshikimate-3-phosphate (EPSP) to yield chorismate, which is the branch point compound that serves as the starting substrate for the three terminal pathways of aromatic amino acid biosynthesis. This reaction introduces a second double bond into the aromatic ring system. This is Chorismate synthase from Corynebacterium efficiens (strain DSM 44549 / YS-314 / AJ 12310 / JCM 11189 / NBRC 100395).